The chain runs to 190 residues: Adenylate kinase (190 aa).

11-16 (GAGKGT) provides a ligand contact to ATP. The interval 31-60 (STGDIFRFNLKNDTELGKQARVFMDNGELV) is NMP. AMP is bound by residues Thr-32, Arg-37, 58 to 60 (ELV), 86 to 89 (GYPR), and Gln-93. The tract at residues 127–137 (ERGKTSGRADD) is LID. Arg-128 contacts ATP. Residues Arg-134 and Arg-146 each contribute to the AMP site. Gly-174 is an ATP binding site.

The protein belongs to the adenylate kinase family. In terms of assembly, monomer.

It is found in the cytoplasm. The catalysed reaction is AMP + ATP = 2 ADP. Its pathway is purine metabolism; AMP biosynthesis via salvage pathway; AMP from ADP: step 1/1. Catalyzes the reversible transfer of the terminal phosphate group between ATP and AMP. Plays an important role in cellular energy homeostasis and in adenine nucleotide metabolism. The sequence is that of Adenylate kinase from Flavobacterium johnsoniae (strain ATCC 17061 / DSM 2064 / JCM 8514 / BCRC 14874 / CCUG 350202 / NBRC 14942 / NCIMB 11054 / UW101) (Cytophaga johnsonae).